The sequence spans 316 residues: D-alanine--D-alanine ligase (316 aa).

The region spanning 104–303 (KRVWLQHGLP…YADLCVAILA (200 aa)) is the ATP-grasp domain. 130–185 (PDRLGLPLILKPPHEGSTVGITKVAGYSDMKAAYELAARFDAEVLAEQFITGRELT) is a binding site for ATP. 3 residues coordinate Mg(2+): aspartate 257, glutamate 270, and asparagine 272.

The protein belongs to the D-alanine--D-alanine ligase family. Mg(2+) is required as a cofactor. Mn(2+) serves as cofactor.

Its subcellular location is the cytoplasm. It carries out the reaction 2 D-alanine + ATP = D-alanyl-D-alanine + ADP + phosphate + H(+). It functions in the pathway cell wall biogenesis; peptidoglycan biosynthesis. Its function is as follows. Cell wall formation. The protein is D-alanine--D-alanine ligase of Bordetella parapertussis (strain 12822 / ATCC BAA-587 / NCTC 13253).